A 124-amino-acid polypeptide reads, in one-letter code: Small ribosomal subunit protein bS6 (124 aa).

The interval 97 to 124 (TGPSPMMKEVQREEAKKAAAAQPTEAQA) is disordered. Residues 114-124 (AAAAQPTEAQA) are compositionally biased toward low complexity.

Belongs to the bacterial ribosomal protein bS6 family.

In terms of biological role, binds together with bS18 to 16S ribosomal RNA. The chain is Small ribosomal subunit protein bS6 from Paraburkholderia phymatum (strain DSM 17167 / CIP 108236 / LMG 21445 / STM815) (Burkholderia phymatum).